A 216-amino-acid polypeptide reads, in one-letter code: uncharacterized protein (216 aa).

It localises to the plastid. The protein localises to the chloroplast. This is an uncharacterized protein from Pyropia yezoensis (Susabi-nori).